The primary structure comprises 373 residues: 1-deoxy-D-xylulose 5-phosphate reductoisomerase (373 aa).

NADPH is bound by residues threonine 10, glycine 11, serine 12, isoleucine 13, arginine 37, and asparagine 112. Lysine 113 is a binding site for 1-deoxy-D-xylulose 5-phosphate. Residue glutamate 114 coordinates NADPH. Aspartate 134 serves as a coordination point for Mn(2+). Residues serine 135, glutamate 136, serine 160, and histidine 183 each contribute to the 1-deoxy-D-xylulose 5-phosphate site. Glutamate 136 is a binding site for Mn(2+). Glycine 189 contributes to the NADPH binding site. Positions 196, 201, 202, and 205 each coordinate 1-deoxy-D-xylulose 5-phosphate. Mn(2+) is bound at residue glutamate 205.

It belongs to the DXR family. Mg(2+) serves as cofactor. Requires Mn(2+) as cofactor.

It carries out the reaction 2-C-methyl-D-erythritol 4-phosphate + NADP(+) = 1-deoxy-D-xylulose 5-phosphate + NADPH + H(+). It participates in isoprenoid biosynthesis; isopentenyl diphosphate biosynthesis via DXP pathway; isopentenyl diphosphate from 1-deoxy-D-xylulose 5-phosphate: step 1/6. Functionally, catalyzes the NADPH-dependent rearrangement and reduction of 1-deoxy-D-xylulose-5-phosphate (DXP) to 2-C-methyl-D-erythritol 4-phosphate (MEP). In Persephonella marina (strain DSM 14350 / EX-H1), this protein is 1-deoxy-D-xylulose 5-phosphate reductoisomerase.